Consider the following 267-residue polypeptide: Indole-3-glycerol phosphate synthase 1 (267 aa).

The protein belongs to the TrpC family.

It carries out the reaction 1-(2-carboxyphenylamino)-1-deoxy-D-ribulose 5-phosphate + H(+) = (1S,2R)-1-C-(indol-3-yl)glycerol 3-phosphate + CO2 + H2O. The protein operates within amino-acid biosynthesis; L-tryptophan biosynthesis; L-tryptophan from chorismate: step 4/5. This is Indole-3-glycerol phosphate synthase 1 (trpC1) from Ralstonia nicotianae (strain ATCC BAA-1114 / GMI1000) (Ralstonia solanacearum).